Here is a 152-residue protein sequence, read N- to C-terminus: D-aminoacyl-tRNA deacylase (152 aa).

The short motif at 142-143 (GP) is the Gly-cisPro motif, important for rejection of L-amino acids element.

It belongs to the DTD family. As to quaternary structure, homodimer.

It localises to the cytoplasm. It catalyses the reaction glycyl-tRNA(Ala) + H2O = tRNA(Ala) + glycine + H(+). The catalysed reaction is a D-aminoacyl-tRNA + H2O = a tRNA + a D-alpha-amino acid + H(+). Functionally, an aminoacyl-tRNA editing enzyme that deacylates mischarged D-aminoacyl-tRNAs. Also deacylates mischarged glycyl-tRNA(Ala), protecting cells against glycine mischarging by AlaRS. Acts via tRNA-based rather than protein-based catalysis; rejects L-amino acids rather than detecting D-amino acids in the active site. By recycling D-aminoacyl-tRNA to D-amino acids and free tRNA molecules, this enzyme counteracts the toxicity associated with the formation of D-aminoacyl-tRNA entities in vivo and helps enforce protein L-homochirality. This chain is D-aminoacyl-tRNA deacylase, found in Burkholderia vietnamiensis (strain G4 / LMG 22486) (Burkholderia cepacia (strain R1808)).